A 335-amino-acid polypeptide reads, in one-letter code: Cell division protein ZipA (335 aa).

At 1-6 (MENLQL) the chain is on the periplasmic side. Residues 7 to 27 (VLFVLGAVAIIAVLVHGFWSI) form a helical membrane-spanning segment. Topologically, residues 28 to 335 (RRQQPKSLKE…SYLQRIRAQM (308 aa)) are cytoplasmic. Disordered stretches follow at residues 37-128 (ESPM…NEEV) and 163-185 (RPAP…VSVE). Positions 170 to 185 (APQSVAPASVEPVSVE) are enriched in low complexity.

This sequence belongs to the ZipA family. As to quaternary structure, interacts with FtsZ via their C-terminal domains.

The protein localises to the cell inner membrane. Its function is as follows. Essential cell division protein that stabilizes the FtsZ protofilaments by cross-linking them and that serves as a cytoplasmic membrane anchor for the Z ring. Also required for the recruitment to the septal ring of downstream cell division proteins. The protein is Cell division protein ZipA of Shewanella loihica (strain ATCC BAA-1088 / PV-4).